Here is a 206-residue protein sequence, read N- to C-terminus: Large ribosomal subunit protein uL3 (206 aa).

Positions 127–151 (SGGPSSHGSKFHRHLGGTGQATTPA) are disordered.

The protein belongs to the universal ribosomal protein uL3 family. Part of the 50S ribosomal subunit. Forms a cluster with proteins L14 and L19.

In terms of biological role, one of the primary rRNA binding proteins, it binds directly near the 3'-end of the 23S rRNA, where it nucleates assembly of the 50S subunit. The sequence is that of Large ribosomal subunit protein uL3 from Borrelia garinii subsp. bavariensis (strain ATCC BAA-2496 / DSM 23469 / PBi) (Borreliella bavariensis).